The sequence spans 103 residues: Phosphoribosyl-ATP pyrophosphatase (103 aa).

Positions 84 to 103 (LQSREGKLSKTSDRKEINDL) are disordered.

It belongs to the PRA-PH family.

The protein resides in the cytoplasm. The catalysed reaction is 1-(5-phospho-beta-D-ribosyl)-ATP + H2O = 1-(5-phospho-beta-D-ribosyl)-5'-AMP + diphosphate + H(+). Its pathway is amino-acid biosynthesis; L-histidine biosynthesis; L-histidine from 5-phospho-alpha-D-ribose 1-diphosphate: step 2/9. In Listeria innocua serovar 6a (strain ATCC BAA-680 / CLIP 11262), this protein is Phosphoribosyl-ATP pyrophosphatase (hisE).